The following is a 320-amino-acid chain: Cytosolic Fe-S cluster assembly factor NUBP1 (320 aa).

M1 bears the N-acetylmethionine mark. Residues C8, C22, C25, and C31 each contribute to the [4Fe-4S] cluster site. An ATP-binding site is contributed by 62 to 69; it reads GKGGVGKS. 2 residues coordinate [4Fe-4S] cluster: C235 and C238. The residue at position 319 (S319) is a Phosphoserine.

This sequence belongs to the Mrp/NBP35 ATP-binding proteins family. NUBP1/NBP35 subfamily. In terms of assembly, heterotetramer of 2 NUBP1 and 2 NUBP2 chains. Interacts with KIFC1. Interacts with the BBS/CCT complex subunit CCT1. It depends on [4Fe-4S] cluster as a cofactor.

It is found in the cytoplasm. Its subcellular location is the nucleus. The protein localises to the cell projection. The protein resides in the cytoskeleton. It localises to the cilium axoneme. It is found in the cilium basal body. Its subcellular location is the microtubule organizing center. The protein localises to the centrosome. The protein resides in the centriole. Component of the cytosolic iron-sulfur (Fe/S) protein assembly (CIA) machinery. Required for maturation of extramitochondrial Fe-S proteins. The NUBP1-NUBP2 heterotetramer forms a Fe-S scaffold complex, mediating the de novo assembly of an Fe-S cluster and its transfer to target apoproteins. Implicated in the regulation of centrosome duplication. Negatively regulates cilium formation and structure. The chain is Cytosolic Fe-S cluster assembly factor NUBP1 from Rattus norvegicus (Rat).